Reading from the N-terminus, the 856-residue chain is Envelope glycoprotein gp160 (856 aa).

Residues 1–22 form the signal peptide; the sequence is MKGSKNQLLIAIVLASAYLIHC. The Extracellular segment spans residues 23-670; it reads KQFVTVFYGI…FTSWVRYIQY (648 aa). The N-linked (GlcNAc...) asparagine; by host glycan is linked to Asn37. Cysteines 44 and 57 form a disulfide. N-linked (GlcNAc...) asparagine; by host glycans are attached at residues Asn70, Asn79, Asn112, Asn116, Asn128, Asn133, Asn142, Asn182, Asn183, Asn196, Asn228, Asn231, Asn238, Asn262, Asn268, Asn279, Asn290, Asn300, Asn355, Asn390, Asn400, Asn440, and Asn457. 5 disulfides stabilise this stretch: Cys101–Cys204, Cys108–Cys195, Cys113–Cys154, Cys217–Cys247, and Cys227–Cys239. Residues 113–153 are V1; sequence CTRNMTTWTGRTDTQNITIINDTSHARADNCTGLKEEEMID. The segment at 154 to 195 is V2; that stretch reads CQFSMTGLERDKRKQYTEAWYSKDVVCDNNTSSQSKCYMNHC. Residues 295–328 form a V3 region; that stretch reads CKRPGNKTVLPITFMSGFKFHSQPVINKKPRQAW. Residues Cys295 and Cys329 are joined by a disulfide bond. Cystine bridges form between Cys382/Cys439 and Cys389/Cys412. Residues 389 to 412 are V4; that stretch reads CNMTWFLNWVENRTGQKQRNYAPC. Positions 455 to 460 are V5; the sequence is QTNITF. The interval 503 to 523 is fusion peptide; sequence GVFVLGFLGFLATAGSAMGAA. The segment at 566–582 is immunosuppression; that stretch reads LQARVTAIEKYLKDQAQ. Residues Asn602, Asn611, and Asn627 are each glycosylated (N-linked (GlcNAc...) asparagine; by host). A coiled-coil region spans residues 615–636; it reads QEWEQKVRYLEANISQSLEQAQ. Residues 648–669 are MPER; binding to GalCer; the sequence is KLNSWDVFTNWLDFTSWVRYIQ. The helical transmembrane segment at 671 to 691 threads the bilayer; it reads GVYVVVGIVALRIVIYIVQML. The Cytoplasmic portion of the chain corresponds to 692–856; sequence SRLRKGYRPV…IRQGAELALL (165 aa). The YXXV motif; contains endocytosis signal signature appears at 698–701; that stretch reads YRPV. Cys764 carries S-palmitoyl cysteine; by host lipidation. A Di-leucine internalization motif motif is present at residues 855 to 856; that stretch reads LL.

As to quaternary structure, the mature envelope protein (Env) consists of a homotrimer of non-covalently associated gp120-gp41 heterodimers. The resulting complex protrudes from the virus surface as a spike. There seems to be as few as 10 spikes on the average virion. Interacts with human CD4, CCR5 and CXCR4, to form a P4HB/PDI-CD4-CXCR4-gp120 complex. Gp120 also interacts with the C-type lectins CD209/DC-SIGN and CLEC4M/DC-SIGNR (collectively referred to as DC-SIGN(R)). Gp120 and gp41 interact with GalCer. The mature envelope protein (Env) consists of a homotrimer of non-covalently associated gp120-gp41 heterodimers. The resulting complex protrudes from the virus surface as a spike. There seems to be as few as 10 spikes on the average virion. Post-translationally, specific enzymatic cleavages in vivo yield mature proteins. Envelope glycoproteins are synthesized as an inactive precursor that is heavily N-glycosylated and processed likely by host cell furin in the Golgi to yield the mature SU and TM proteins. The cleavage site between SU and TM requires the minimal sequence [KR]-X-[KR]-R. In terms of processing, palmitoylation of the transmembrane protein and of Env polyprotein (prior to its proteolytic cleavage) is essential for their association with host cell membrane lipid rafts. Palmitoylation is therefore required for envelope trafficking to classical lipid rafts, but not for viral replication.

It is found in the virion membrane. Its subcellular location is the host cell membrane. It localises to the host endosome membrane. Its function is as follows. The surface protein gp120 (SU) attaches the virus to the host lymphoid cell by binding to the primary receptor CD4. This interaction induces a structural rearrangement creating a high affinity binding site for a chemokine coreceptor like CXCR4 and/or CCR5. This peculiar 2 stage receptor-interaction strategy allows gp120 to maintain the highly conserved coreceptor-binding site in a cryptic conformation, protected from neutralizing antibodies. Since CD4 also displays a binding site for the disulfide-isomerase P4HB/PDI, a P4HB/PDI-CD4-CXCR4-gp120 complex may form. In that complex, P4HB/PDI could reach and reduce gp120 disulfide bonds, causing major conformational changes in gp120. TXN, another PDI family member could also be involved in disulfide rearrangements in Env during fusion. These changes are transmitted to the transmembrane protein gp41 and are thought to activate its fusogenic potential by unmasking its fusion peptide. The surface protein gp120 is a ligand for CD209/DC-SIGN and CLEC4M/DC-SIGNR, which are respectively found on dendritic cells (DCs), and on endothelial cells of liver sinusoids and lymph node sinuses. These interactions allow capture of viral particles at mucosal surfaces by these cells and subsequent transmission to permissive cells. DCs are professional antigen presenting cells, critical for host immunity by inducing specific immune responses against a broad variety of pathogens. They act as sentinels in various tissues where they take up antigen, process it, and present it to T-cells following migration to lymphoid organs. HIV subverts the migration properties of dendritic cells to gain access to CD4+ T-cells in lymph nodes. Virus transmission to permissive T-cells occurs either in trans (without DCs infection, through viral capture and transmission), or in cis (following DCs productive infection, through the usual CD4-gp120 interaction), thereby inducing a robust infection. In trans infection, bound virions remain infectious over days and it is proposed that they are not degraded, but protected in non-lysosomal acidic organelles within the DCs close to the cell membrane thus contributing to the viral infectious potential during DCs' migration from the periphery to the lymphoid tissues. On arrival at lymphoid tissues, intact virions recycle back to DCs' cell surface allowing virus transmission to CD4+ T-cells. Virion capture also seems to lead to MHC-II-restricted viral antigen presentation, and probably to the activation of HIV-specific CD4+ cells. Functionally, the transmembrane protein gp41 (TM) acts as a class I viral fusion protein. Under the current model, the protein has at least 3 conformational states: pre-fusion native state, pre-hairpin intermediate state, and post-fusion hairpin state. During fusion of viral and target intracellular membranes, the coiled coil regions (heptad repeats) assume a trimer-of-hairpins structure, positioning the fusion peptide in close proximity to the C-terminal region of the ectodomain. The formation of this structure appears to drive apposition and subsequent fusion of viral and target cell membranes. Complete fusion occurs in host cell endosomes and is dynamin-dependent, however some lipid transfer might occur at the plasma membrane. The virus undergoes clathrin-dependent internalization long before endosomal fusion, thus minimizing the surface exposure of conserved viral epitopes during fusion and reducing the efficacy of inhibitors targeting these epitopes. Membranes fusion leads to delivery of the nucleocapsid into the cytoplasm. In terms of biological role, the envelope glycoprotein gp160 precursor down-modulates cell surface CD4 antigen by interacting with it in the endoplasmic reticulum and blocking its transport to the cell surface. Its function is as follows. The gp120-gp41 heterodimer seems to contribute to T-cell depletion during HIV-1 infection. The envelope glycoproteins expressed on the surface of infected cells induce apoptosis through an interaction with uninfected cells expressing the receptor (CD4) and the coreceptors CXCR4 or CCR5. This type of bystander killing may be obtained by at least three distinct mechanisms. First, the interaction between the 2 cells can induce cellular fusion followed by nuclear fusion within the syncytium. Syncytia are condemned to die from apoptosis. Second, the 2 interacting cells may not fuse entirely and simply exchange plasma membrane lipids, after a sort of hemifusion process, followed by rapid death. Third, it is possible that virus-infected cells, on the point of undergoing apoptosis, fuse with CD4-expressing cells, in which case apoptosis is rapidly transmitted from one cell to the other and thus occurs in a sort of contagious fashion. The gp120-gp41 heterodimer allows rapid transcytosis of the virus through CD4 negative cells such as simple epithelial monolayers of the intestinal, rectal and endocervical epithelial barriers. Both gp120 and gp41 specifically recognize glycosphingolipids galactosyl-ceramide (GalCer) or 3' sulfo-galactosyl-ceramide (GalS) present in the lipid rafts structures of epithelial cells. Binding to these alternative receptors allows the rapid transcytosis of the virus through the epithelial cells. This transcytotic vesicle-mediated transport of virions from the apical side to the basolateral side of the epithelial cells does not involve infection of the cells themselves. The polypeptide is Envelope glycoprotein gp160 (env) (Human immunodeficiency virus type 2 subtype A (isolate NIH-Z) (HIV-2)).